The primary structure comprises 627 residues: MFFINFKKIKKKQFPIYLTQHRIITVFLIFIYFINLKDCFHINNSRILSDVDKHRGLYYNIPKCNVCHKCSICTHENGEAQNVIPMVAIPSKRKHIQDINKEREENKYPLHIFEEKDIYNNKDNVVKKEDIYKLRKKKKQKKNCLNFLEKDTMFLSPSHDKETFHINHMNKIKDEKYKQEYEEEKEIYDNTNTSQEKNETNNEQNLNINLINNDKVTLPLQQLEDSQYVGYIQIGTPPQTIRPIFDTGSTNIWIVSTKCKDETCLKVHRYNHKLSSSFKYYEPHTNLDIMFGTGIIQGVIGVETFKIGPFEIKNQSFGLVKREKASDNKSNVFERINFEGIVGLAFPEMLSTGKSTLYENLMSSYKLQHNEFSIYIGKDSKYSALIFGGVDKNFFEGDIYMFPVVKEYYWEIHFDGLYIDHQKFCCGVNSIVYDLKKKDQENNKLFFTRKYFRKNKFKTHLRKYLLKKIKHQKKQKHSNHKKKKLNKKKNYLIFDSGTSFNSVPKDEIEYFFRVVPSKKCDDSNIDQVVSSYPNLTYVINKMPFTLTPSQYLVRKNDMCKPAFMEIEVSSEYGHAYILGNATFMRYYYTVYRRGNNNNSSYVGIAKAVHTEENEKYLSSLHNKINNL.

At 1–13 the chain is on the cytoplasmic side; the sequence is MFFINFKKIKKKQ. The helical; Signal-anchor for type II membrane protein transmembrane segment at 14–34 threads the bilayer; that stretch reads FPIYLTQHRIITVFLIFIYFI. Residues 35-627 lie on the Lumenal side of the membrane; the sequence is NLKDCFHINN…SSLHNKINNL (593 aa). One can recognise a Peptidase A1 domain in the interval 228-605; sequence YVGYIQIGTP…NNNSSYVGIA (378 aa). Active-site residues include D246 and D495.

Belongs to the peptidase A1 family. Post-translationally, autocleaved into a p55 mature form.

The protein localises to the membrane. Its subcellular location is the cytoplasmic vesicle. It is found in the secretory vesicle. The protein resides in the rhoptry. Inhibited by small molecule 49c. Inhibited by small molecule WM382. Its function is as follows. During the asexual blood stage, initiates the proteolytic maturation of several rhoptry proteins and thus, is required for merozoite invasion of host erythrocytes and probably the subsequent development of the ring-stage. Cleaves rhoptry associated protein 1 RAP1 and apical sushi protein ASP during schizont maturation. Also cleaves rhoptry protein RON3. The sequence is that of Plasmepsin IX from Plasmodium falciparum (isolate 3D7).